An 828-amino-acid chain; its full sequence is Leucine--tRNA ligase (828 aa).

Positions 42 to 52 match the 'HIGH' region motif; sequence PYPSGTLHVGH. Residues 582–586 carry the 'KMSKS' region motif; the sequence is KMSKS. Position 585 (lysine 585) interacts with ATP.

It belongs to the class-I aminoacyl-tRNA synthetase family.

Its subcellular location is the cytoplasm. The catalysed reaction is tRNA(Leu) + L-leucine + ATP = L-leucyl-tRNA(Leu) + AMP + diphosphate. This Petrotoga mobilis (strain DSM 10674 / SJ95) protein is Leucine--tRNA ligase.